The sequence spans 227 residues: Cytochrome c oxidase subunit 2 (227 aa).

Over 1–14 (MAYPMQLGFQDATS) the chain is Mitochondrial intermembrane. Residues 15-45 (PIMEELLHFHDHTLMIVFLISSLVLYIISLM) traverse the membrane as a helical segment. At 46–59 (LTTKLTHTSTMDAQ) the chain is on the mitochondrial matrix side. Residues 60–87 (EVETVWTILPAVILIMIALPSLRILYMM) form a helical membrane-spanning segment. Over 88–227 (DEINNPSLTV…HFEKWSASML (140 aa)) the chain is Mitochondrial intermembrane. 6 residues coordinate Cu cation: His161, Cys196, Glu198, Cys200, His204, and Met207. Glu198 is a binding site for Mg(2+).

Belongs to the cytochrome c oxidase subunit 2 family. Component of the cytochrome c oxidase (complex IV, CIV), a multisubunit enzyme composed of 14 subunits. The complex is composed of a catalytic core of 3 subunits MT-CO1, MT-CO2 and MT-CO3, encoded in the mitochondrial DNA, and 11 supernumerary subunits COX4I, COX5A, COX5B, COX6A, COX6B, COX6C, COX7A, COX7B, COX7C, COX8 and NDUFA4, which are encoded in the nuclear genome. The complex exists as a monomer or a dimer and forms supercomplexes (SCs) in the inner mitochondrial membrane with NADH-ubiquinone oxidoreductase (complex I, CI) and ubiquinol-cytochrome c oxidoreductase (cytochrome b-c1 complex, complex III, CIII), resulting in different assemblies (supercomplex SCI(1)III(2)IV(1) and megacomplex MCI(2)III(2)IV(2)). Found in a complex with TMEM177, COA6, COX18, COX20, SCO1 and SCO2. Interacts with TMEM177 in a COX20-dependent manner. Interacts with COX20. Interacts with COX16. The cofactor is Cu cation.

The protein resides in the mitochondrion inner membrane. The enzyme catalyses 4 Fe(II)-[cytochrome c] + O2 + 8 H(+)(in) = 4 Fe(III)-[cytochrome c] + 2 H2O + 4 H(+)(out). Component of the cytochrome c oxidase, the last enzyme in the mitochondrial electron transport chain which drives oxidative phosphorylation. The respiratory chain contains 3 multisubunit complexes succinate dehydrogenase (complex II, CII), ubiquinol-cytochrome c oxidoreductase (cytochrome b-c1 complex, complex III, CIII) and cytochrome c oxidase (complex IV, CIV), that cooperate to transfer electrons derived from NADH and succinate to molecular oxygen, creating an electrochemical gradient over the inner membrane that drives transmembrane transport and the ATP synthase. Cytochrome c oxidase is the component of the respiratory chain that catalyzes the reduction of oxygen to water. Electrons originating from reduced cytochrome c in the intermembrane space (IMS) are transferred via the dinuclear copper A center (CU(A)) of subunit 2 and heme A of subunit 1 to the active site in subunit 1, a binuclear center (BNC) formed by heme A3 and copper B (CU(B)). The BNC reduces molecular oxygen to 2 water molecules using 4 electrons from cytochrome c in the IMS and 4 protons from the mitochondrial matrix. The polypeptide is Cytochrome c oxidase subunit 2 (MT-CO2) (Tragelaphus imberbis (Lesser kudu)).